The sequence spans 710 residues: MDQERHEFSIDWAGRTLSVEVGQLAKQANGAVLVRYGDTAVLSTATASKEPKDLPFFPLTVNYEERLYAAGKIPGGFIKREGRPSERAILTSRLIDRPIRPLFPDGFRNDVQVISIVMSSDQDASPEMAAMIGSSLALCVSDIPFEGPIAGVTVGRINGEFIMNPTPAQLAESDIDLTVAGTKEAINMVEAGAKEVPEDVMLEAILAGHENIKKMIAFQEKVVEVCGKEKREVQLKTFDAELEARLRESAEASIKEAVRIAEKHARQDAIDEIIAAQVEQHSDDDSINVDEVKEILQMFVKEEVRRLITVEKIRPDGRGVDEIRPLSSQIKLLPRTHGSGLFTRGQTQALSVCTLGALGDVQVLDGLGIEETKRFMHHYNFPQFSVGETGPIRAPGRREIGHGALGERALEQVIPSEQEFPYTIRLVSEVLESNGSTSQASICASTLAMMDAGVPIKAPVAGIAMGLVKQGEHMTVLTDIQGMEDALGDMDFKVAGTANGVTALQMDIKISGINREVLEQALEQAKQGRMKILSNMMEAIDKPRAELSEYAPKILTLTINPDKIRDVIGPSGKVINKIIEETGVKIDIEQDGTVYISSLDTAMNQKAKQIIEDLVREVQVGETYHGKVKRIEKFGAFVELFKGKDGLLHISQIAEERINKVEDVFKLGDEVDVRVTEIDNQGRVNLSRKVLLKEQREKLEKEEAKDTANE.

Mg(2+) contacts are provided by Asp-485 and Asp-491. The 60-residue stretch at 552-611 folds into the KH domain; the sequence is PKILTLTINPDKIRDVIGPSGKVINKIIEETGVKIDIEQDGTVYISSLDTAMNQKAKQII. The S1 motif domain occupies 621-689; sequence GETYHGKVKR…NQGRVNLSRK (69 aa).

The protein belongs to the polyribonucleotide nucleotidyltransferase family. It depends on Mg(2+) as a cofactor.

It is found in the cytoplasm. The catalysed reaction is RNA(n+1) + phosphate = RNA(n) + a ribonucleoside 5'-diphosphate. In terms of biological role, involved in mRNA degradation. Catalyzes the phosphorolysis of single-stranded polyribonucleotides processively in the 3'- to 5'-direction. The protein is Polyribonucleotide nucleotidyltransferase of Shouchella clausii (strain KSM-K16) (Alkalihalobacillus clausii).